The sequence spans 141 residues: Proteasome maturation protein (141 aa).

Lysine 39 participates in a covalent cross-link: Glycyl lysine isopeptide (Lys-Gly) (interchain with G-Cter in SUMO2).

This sequence belongs to the POMP/UMP1 family. As to quaternary structure, constituent of preproteasomes, but not of mature 20S proteasomes. Within the preproteasome, may directly interact with PSMB1/beta6, PSMB4/beta7, PSMB5/beta5, PSMB6/beta1 and PSMB9/beta1i. Interaction with PSMB8/beta5i is controversial. Forms tetramers.

Its subcellular location is the cytoplasm. The protein resides in the cytosol. It is found in the nucleus. The protein localises to the microsome membrane. Functionally, molecular chaperone essential for the assembly of standard proteasomes and immunoproteasomes. Degraded after completion of proteasome maturation. Mediates the association of 20S preproteasome with the endoplasmic reticulum. The sequence is that of Proteasome maturation protein (POMP) from Bos taurus (Bovine).